The sequence spans 188 residues: Putative manganese efflux pump MntP (188 aa).

6 helical membrane passes run 3–23 (ITATVLLAFGMSMDAFAASIG), 41–61 (LIFGAVETLTPLIGWGLGMLA), 66–86 (LEWNHWVAFILLVFLGIRMII), 107–129 (LLVTTAIATSLDAMAVGVGLAFL), 143–163 (ATLIMSTLGIMVGRFIGPLLG), and 168–188 (ILGGAVLIGIGAQILWTHFHG).

The protein belongs to the MntP (TC 9.B.29) family.

It localises to the cell inner membrane. In terms of biological role, probably functions as a manganese efflux pump. In Citrobacter koseri (strain ATCC BAA-895 / CDC 4225-83 / SGSC4696), this protein is Putative manganese efflux pump MntP.